Here is a 669-residue protein sequence, read N- to C-terminus: DNA helicase/primase complex-associated protein (669 aa).

The disordered stretch occupies residues 502 to 526 (RSTAGTGGEPNPRHITGPDTEGNGE).

The protein belongs to the herpesviridae HEPA family. As to quaternary structure, associates with the primase and the helicase to form the helicase-primase complex. Interacts with the origin-binding protein. Interacts with the polymerase catalytic subunit.

It is found in the host nucleus. In terms of biological role, component of the helicase/primase complex. Unwinds the DNA at the replication forks and generates single-stranded DNA for both leading and lagging strand synthesis. The primase synthesizes short RNA primers on the lagging strand that the polymerase presumably elongates using dNTPs. The primase-associated factor has no known catalytic activity in the complex and may serve to facilitate the formation of the replisome by directly interacting with the origin-binding protein and the polymerase. This is DNA helicase/primase complex-associated protein (ORF40) from Human herpesvirus 8 type P (isolate GK18) (HHV-8).